We begin with the raw amino-acid sequence, 120 residues long: Large ribosomal subunit protein eL8 (120 aa).

Belongs to the eukaryotic ribosomal protein eL8 family. As to quaternary structure, part of the 50S ribosomal subunit. Probably part of the RNase P complex.

It is found in the cytoplasm. Its function is as follows. Multifunctional RNA-binding protein that recognizes the K-turn motif in ribosomal RNA, the RNA component of RNase P, box H/ACA, box C/D and box C'/D' sRNAs. This is Large ribosomal subunit protein eL8 from Halobacterium salinarum (strain ATCC 29341 / DSM 671 / R1).